Reading from the N-terminus, the 450-residue chain is MSLRLPSGSRRASPRPTTGSLRLSSGGASFGAGNACSMPGIGSSFSCAFGGSSSGGNALGGNPCAGFTVNEGGLLSGNEKVTMQNLNDRLASYLENVRALEEANADLEQKIKGWYEKFGPGSCRGLDHDYSRYFPIIEDLKNQIIASTTSNANAVLQIDNARLTADDFRLKYENELALHQSVESDVNGLRRVLDEITLCRTDLEIQYETLSEELTYLKKNHKEEMQVLQCAAGGNVNVEMNAAPGVDLTVLLNNMRAEYEALAEQNRRDAEAWFNEKSASLQQQITEDVGATTSARNELTEMKRNLQTLEIELQSLLATKHSLECSLTETEGNYCAQLAQIQAQIGALEEQLHQVRTETEGQKLEYEQLLDIKVHLEKEIETYCLLIGGDDGACKSGGYKSKDYGAGNVGNQMKDPVKAIVVKKVLEEVDQRSKILTPRLHSLEEKSQSN.

Positions 1-25 (MSLRLPSGSRRASPRPTTGSLRLSS) are disordered. The segment at 1-78 (MSLRLPSGSR…VNEGGLLSGN (78 aa)) is head. Positions 79 to 114 (EKVTMQNLNDRLASYLENVRALEEANADLEQKIKGW) are coil 1A. The 316-residue stretch at 79 to 394 (EKVTMQNLND…LLIGGDDGAC (316 aa)) folds into the IF rod domain. Residues 115–136 (YEKFGPGSCRGLDHDYSRYFPI) are linker 1. A coil 1B region spans residues 137–228 (IEDLKNQIIA…KNHKEEMQVL (92 aa)). Residues 229-251 (QCAAGGNVNVEMNAAPGVDLTVL) form a linker 12 region. A coil 2 region spans residues 252 to 390 (LNNMRAEYEA…ETYCLLIGGD (139 aa)). The tract at residues 391-450 (DGACKSGGYKSKDYGAGNVGNQMKDPVKAIVVKKVLEEVDQRSKILTPRLHSLEEKSQSN) is tail. At Ser442 the chain carries Phosphoserine.

It belongs to the intermediate filament family. As to quaternary structure, heterodimer of a type I and a type II keratin. Heterodimer with type II keratin KRT5 leading to the formation of keratin intermediate filament (KIF) network. Interacts with KRT6A to form filaments.

The protein localises to the cytoplasm. In terms of biological role, essential for the proper assembly of type I and type II keratin protein complexes and formation of keratin intermediate filaments in the inner root sheath (irs). Plays a role in the cytoskeleton organization. The polypeptide is Keratin, type I cytoskeletal 25 (Bos taurus (Bovine)).